Consider the following 111-residue polypeptide: MMYLLIFLVSLLSCAGQLCQKHAAGASSGAGELRHRVRWLAISLLLLGGAMLVWLWVLQRVPVGIAYPMFSLNFVLVTLAARWLWREPVSLRHGCGLLLIVAGVMCMGVNL.

The next 3 membrane-spanning stretches (helical) occupy residues 39–59 (WLAISLLLLGGAMLVWLWVLQ), 61–81 (VPVGIAYPMFSLNFVLVTLAA), and 89–109 (VSLRHGCGLLLIVAGVMCMGV). One can recognise an EamA domain in the interval 40-109 (LAISLLLLGG…IVAGVMCMGV (70 aa)).

The protein belongs to the ArnE family. As to quaternary structure, heterodimer of ArnE and ArnF.

It localises to the cell inner membrane. The protein operates within bacterial outer membrane biogenesis; lipopolysaccharide biosynthesis. Functionally, translocates 4-amino-4-deoxy-L-arabinose-phosphoundecaprenol (alpha-L-Ara4N-phosphoundecaprenol) from the cytoplasmic to the periplasmic side of the inner membrane. This is Probable 4-amino-4-deoxy-L-arabinose-phosphoundecaprenol flippase subunit ArnE from Sodalis glossinidius (strain morsitans).